The following is a 198-amino-acid chain: Ion-translocating oxidoreductase complex subunit B (198 aa).

Residues 1–26 are hydrophobic; it reads MTTIMIAVLAIALLATLFGAILGFAS. One can recognise a 4Fe-4S domain in the interval 32-90; it reads EADPIVDQIDAILPQTQCGQCGYPGCRPYAEAIANGDSINKCPPGGQATIEKLADLMGV. 12 residues coordinate [4Fe-4S] cluster: C49, C52, C57, C73, C114, C117, C120, C124, C144, C147, C150, and C154. 4Fe-4S ferredoxin-type domains lie at 105–134 and 135–164; these read KVAF…GGTK and ALHT…MIPL.

The protein belongs to the 4Fe4S bacterial-type ferredoxin family. RnfB subfamily. In terms of assembly, the complex is composed of six subunits: RnfA, RnfB, RnfC, RnfD, RnfE and RnfG. [4Fe-4S] cluster is required as a cofactor.

Its subcellular location is the cell inner membrane. Its function is as follows. Part of a membrane-bound complex that couples electron transfer with translocation of ions across the membrane. This chain is Ion-translocating oxidoreductase complex subunit B, found in Vibrio vulnificus (strain CMCP6).